The sequence spans 603 residues: Probable NOT transcription complex subunit VIP2 (603 aa).

2 stretches are compositionally biased toward polar residues: residues Met1–Ser28 and Asn36–Ser70. 4 disordered regions span residues Met1–Ser70, Asn212–Leu242, Ala306–Ser335, and Ser355–Ser377. A compositionally biased stretch (polar residues) spans Gly312–Ser335.

Belongs to the CNOT2/3/5 family. As to quaternary structure, binds to VIP1. Interacts with Agrobacterium tumefaciens VirE2. Forms a complex made of Agrobacterium VirE2, VIP1, VIP2 and single-stranded DNA (ssDNA).

It is found in the nucleus. Its function is as follows. Transcriptional regulator required for Agrobacterium-mediated stable genetic transformation by T-DNA integration in host genome, but not for T-DNA transient expression. This is Probable NOT transcription complex subunit VIP2 (VIP2) from Nicotiana benthamiana.